Here is a 384-residue protein sequence, read N- to C-terminus: Glucans biosynthesis protein C (384 aa).

Transmembrane regions (helical) follow at residues 17–37 (AWLM…THSW), 54–74 (FIHA…SYML), 91–111 (VGIP…ILLQ), 140–160 (LWFL…FTWF), 173–193 (AISL…YAAI), 212–232 (FIVM…LAFI), 240–260 (FTTP…AYLL), 274–294 (TESV…FSLG), 311–331 (ASLF…AYIT), and 338–358 (LIGF…LYEI).

It belongs to the acyltransferase 3 family. OpgC subfamily.

Its subcellular location is the cell membrane. It functions in the pathway glycan metabolism; osmoregulated periplasmic glucan (OPG) biosynthesis. Functionally, necessary for the succinyl substitution of periplasmic glucans. Could catalyze the transfer of succinyl residues from the cytoplasmic side of the membrane to the nascent glucan backbones on the periplasmic side of the membrane. In Salmonella typhi, this protein is Glucans biosynthesis protein C.